A 288-amino-acid polypeptide reads, in one-letter code: RanBP2-type zinc finger protein At1g67325 (288 aa).

Residues 1 to 11 (MSQVDNRNSSA) show a composition bias toward polar residues. 5 disordered regions span residues 1 to 24 (MSQVDNRNSSAAKRARTDGGRRED), 52 to 77 (PADHNGKSAPKPMQHQQGFSSPGAYL), 176 to 198 (MPRPRFYPDEKSQKRDSTRDNDW), 222 to 248 (PKPGSQQGGSSDKISKQNAPEGSWKCD), and 265 to 288 (NCGADKPGDRSNGSPSRAPEENDQ). Positions 15-24 (ARTDGGRRED) are enriched in basic and acidic residues. 3 RanBP2-type zinc fingers span residues 22–53 (REDDWICPSCGNVNFSFRTTCNMRNCTQPRPA), 194–225 (RDNDWTCPNCGNVNFSFRTVCNMRKCNTPKPG), and 241–272 (PEGSWKCDNCGNINYPFRSKCNRQNCGADKPG). The span at 181-197 (FYPDEKSQKRDSTRDND) shows a compositional bias: basic and acidic residues. Residues 223 to 241 (KPGSQQGGSSDKISKQNAP) show a composition bias toward polar residues. Ser278 is modified (phosphoserine).

The protein is RanBP2-type zinc finger protein At1g67325 of Arabidopsis thaliana (Mouse-ear cress).